A 209-amino-acid polypeptide reads, in one-letter code: Ion-translocating oxidoreductase complex subunit G (209 aa).

The chain crosses the membrane as a helical span at residues 9–29 (GLVLAIFACASTGLVAVTHYL). At Thr-175 the chain carries FMN phosphoryl threonine.

This sequence belongs to the RnfG family. The complex is composed of six subunits: RnfA, RnfB, RnfC, RnfD, RnfE and RnfG. Requires FMN as cofactor.

The protein localises to the cell inner membrane. Its function is as follows. Part of a membrane-bound complex that couples electron transfer with translocation of ions across the membrane. In Vibrio atlanticus (strain LGP32) (Vibrio splendidus (strain Mel32)), this protein is Ion-translocating oxidoreductase complex subunit G.